The primary structure comprises 306 residues: Probable dimethyladenosine transferase (306 aa).

S-adenosyl-L-methionine-binding residues include H30, L32, G57, E78, D106, and N121.

Belongs to the class I-like SAM-binding methyltransferase superfamily. rRNA adenine N(6)-methyltransferase family. In terms of assembly, part of the small subunit (SSU) processome, composed of more than 70 proteins and the RNA chaperone small nucleolar RNA (snoRNA) U3.

It is found in the nucleus. The protein localises to the nucleolus. It catalyses the reaction adenosine(1779)/adenosine(1780) in 18S rRNA + 4 S-adenosyl-L-methionine = N(6)-dimethyladenosine(1779)/N(6)-dimethyladenosine(1780) in 18S rRNA + 4 S-adenosyl-L-homocysteine + 4 H(+). In terms of biological role, specifically dimethylates two adjacent adenosines in the loop of a conserved hairpin near the 3'-end of 18S rRNA in the 40S particle. Involved in the pre-rRNA processing steps leading to small-subunit rRNA production independently of its RNA-modifying catalytic activity. Part of the small subunit (SSU) processome, first precursor of the small eukaryotic ribosomal subunit. During the assembly of the SSU processome in the nucleolus, many ribosome biogenesis factors, an RNA chaperone and ribosomal proteins associate with the nascent pre-rRNA and work in concert to generate RNA folding, modifications, rearrangements and cleavage as well as targeted degradation of pre-ribosomal RNA by the RNA exosome. The polypeptide is Probable dimethyladenosine transferase (Drosophila melanogaster (Fruit fly)).